The sequence spans 459 residues: Glycosyl hydrolase family 109 protein (459 aa).

Positions 1–31 (MHNIHRRNFLKAAGAATAGLVTANIALNAYA) form a signal peptide, tat-type signal. Residues 64 to 65 (ER), aspartate 86, 135 to 138 (WEWH), 155 to 156 (EV), and asparagine 184 each bind NAD(+). Residues tyrosine 213, arginine 232, 244-247 (YPTH), and tyrosine 326 each bind substrate. Residue tyrosine 244 participates in NAD(+) binding.

The protein belongs to the Gfo/Idh/MocA family. Glycosyl hydrolase 109 subfamily. The cofactor is NAD(+). In terms of processing, predicted to be exported by the Tat system. The position of the signal peptide cleavage has not been experimentally proven.

Glycosidase. The sequence is that of Glycosyl hydrolase family 109 protein from Shewanella baltica (strain OS195).